The following is a 285-amino-acid chain: 2-methoxy-6-polyprenyl-1,4-benzoquinol methylase, mitochondrial (285 aa).

A mitochondrion-targeting transit peptide spans Met1–Ser30. S-adenosyl-L-methionine contacts are provided by residues Thr106, Asp126, Asn156–Ala157, and Ser173.

This sequence belongs to the class I-like SAM-binding methyltransferase superfamily. MenG/UbiE family. Component of a multi-subunit COQ enzyme complex.

The protein localises to the mitochondrion inner membrane. It carries out the reaction a 2-methoxy-6-(all-trans-polyprenyl)benzene-1,4-diol + S-adenosyl-L-methionine = a 5-methoxy-2-methyl-3-(all-trans-polyprenyl)benzene-1,4-diol + S-adenosyl-L-homocysteine + H(+). It functions in the pathway cofactor biosynthesis; ubiquinone biosynthesis. In terms of biological role, methyltransferase required for the conversion of 2-polyprenyl-6-methoxy-1,4-benzoquinol (DDMQH2) to 2-polyprenyl-3-methyl-6-methoxy-1,4-benzoquinol (DMQH2). The polypeptide is 2-methoxy-6-polyprenyl-1,4-benzoquinol methylase, mitochondrial (Caenorhabditis elegans).